Reading from the N-terminus, the 294-residue chain is 4-hydroxy-tetrahydrodipicolinate synthase (294 aa).

A pyruvate-binding site is contributed by T47. Y135 (proton donor/acceptor) is an active-site residue. Residue K163 is the Schiff-base intermediate with substrate of the active site. V205 serves as a coordination point for pyruvate.

Belongs to the DapA family. As to quaternary structure, homotetramer; dimer of dimers.

It localises to the cytoplasm. It catalyses the reaction L-aspartate 4-semialdehyde + pyruvate = (2S,4S)-4-hydroxy-2,3,4,5-tetrahydrodipicolinate + H2O + H(+). It participates in amino-acid biosynthesis; L-lysine biosynthesis via DAP pathway; (S)-tetrahydrodipicolinate from L-aspartate: step 3/4. Catalyzes the condensation of (S)-aspartate-beta-semialdehyde [(S)-ASA] and pyruvate to 4-hydroxy-tetrahydrodipicolinate (HTPA). The polypeptide is 4-hydroxy-tetrahydrodipicolinate synthase (Rickettsia bellii (strain OSU 85-389)).